The primary structure comprises 207 residues: Guanylate kinase (207 aa).

Positions 10-187 constitute a Guanylate kinase-like domain; the sequence is GFFIVLSAAS…AVERLQVIYQ (178 aa). An ATP-binding site is contributed by 17–24; that stretch reads AASGTGKT.

Belongs to the guanylate kinase family.

It is found in the cytoplasm. It carries out the reaction GMP + ATP = GDP + ADP. In terms of biological role, essential for recycling GMP and indirectly, cGMP. This chain is Guanylate kinase, found in Syntrophus aciditrophicus (strain SB).